The primary structure comprises 228 residues: Protein GrpE (228 aa).

Residues 1–22 (MDDKQKTNEEVKASSFDSEKSS) are compositionally biased toward basic and acidic residues. The disordered stretch occupies residues 1–71 (MDDKQKTNEE…DQTNTNNNEL (71 aa)). Residues 38–53 (QNVQHDNGSNPAQKQN) show a composition bias toward polar residues.

This sequence belongs to the GrpE family. Homodimer.

It is found in the cytoplasm. In terms of biological role, participates actively in the response to hyperosmotic and heat shock by preventing the aggregation of stress-denatured proteins, in association with DnaK and GrpE. It is the nucleotide exchange factor for DnaK and may function as a thermosensor. Unfolded proteins bind initially to DnaJ; upon interaction with the DnaJ-bound protein, DnaK hydrolyzes its bound ATP, resulting in the formation of a stable complex. GrpE releases ADP from DnaK; ATP binding to DnaK triggers the release of the substrate protein, thus completing the reaction cycle. Several rounds of ATP-dependent interactions between DnaJ, DnaK and GrpE are required for fully efficient folding. The chain is Protein GrpE from Coprothermobacter proteolyticus (strain ATCC 35245 / DSM 5265 / OCM 4 / BT).